The following is a 236-amino-acid chain: Probable transcriptional regulatory protein FP0835 (236 aa).

This sequence belongs to the TACO1 family.

The protein resides in the cytoplasm. This Flavobacterium psychrophilum (strain ATCC 49511 / DSM 21280 / CIP 103535 / JIP02/86) protein is Probable transcriptional regulatory protein FP0835.